The chain runs to 158 residues: Small ribosomal subunit protein uS7 (158 aa).

The protein belongs to the universal ribosomal protein uS7 family. As to quaternary structure, part of the 30S ribosomal subunit. Contacts proteins S9 and S11.

Its function is as follows. One of the primary rRNA binding proteins, it binds directly to 16S rRNA where it nucleates assembly of the head domain of the 30S subunit. Is located at the subunit interface close to the decoding center, probably blocks exit of the E-site tRNA. The protein is Small ribosomal subunit protein uS7 of Parabacteroides distasonis (strain ATCC 8503 / DSM 20701 / CIP 104284 / JCM 5825 / NCTC 11152).